The primary structure comprises 223 residues: Ribosomal RNA small subunit methyltransferase G (223 aa).

Residues glycine 85, phenylalanine 90, and arginine 154 each coordinate S-adenosyl-L-methionine.

It belongs to the methyltransferase superfamily. RNA methyltransferase RsmG family.

Its subcellular location is the cytoplasm. The enzyme catalyses guanosine(527) in 16S rRNA + S-adenosyl-L-methionine = N(7)-methylguanosine(527) in 16S rRNA + S-adenosyl-L-homocysteine. Specifically methylates the N7 position of guanine in position 527 of 16S rRNA. In Rhodopseudomonas palustris (strain ATCC BAA-98 / CGA009), this protein is Ribosomal RNA small subunit methyltransferase G.